The following is a 903-amino-acid chain: Cell division cycle protein 48 homolog MJ1156 (903 aa).

Residues 220–227 and 493–500 each bind ATP; these read GPPGTGKT.

It belongs to the AAA ATPase family. CDC48 subfamily.

The chain is Cell division cycle protein 48 homolog MJ1156 from Methanocaldococcus jannaschii (strain ATCC 43067 / DSM 2661 / JAL-1 / JCM 10045 / NBRC 100440) (Methanococcus jannaschii).